The sequence spans 776 residues: Homoaconitase, mitochondrial (776 aa).

Residues 1–24 (MVALRRAVALNAVAIARLQTRALT) constitute a mitochondrion transit peptide. [4Fe-4S] cluster is bound by residues Cys-392, Cys-459, and Cys-462.

Belongs to the aconitase/IPM isomerase family. [4Fe-4S] cluster serves as cofactor.

The protein resides in the mitochondrion. It carries out the reaction (2R,3S)-homoisocitrate = cis-homoaconitate + H2O. Its pathway is amino-acid biosynthesis; L-lysine biosynthesis via AAA pathway; L-alpha-aminoadipate from 2-oxoglutarate: step 3/5. Catalyzes the reversible hydration of cis-homoaconitate to (2R,3S)-homoisocitrate, a step in the alpha-aminoadipate pathway for lysine biosynthesis. The chain is Homoaconitase, mitochondrial (LYS4) from Gibberella zeae (strain ATCC MYA-4620 / CBS 123657 / FGSC 9075 / NRRL 31084 / PH-1) (Wheat head blight fungus).